The chain runs to 247 residues: Cell division protein ZapD (247 aa).

This sequence belongs to the ZapD family. Interacts with FtsZ.

It is found in the cytoplasm. Cell division factor that enhances FtsZ-ring assembly. Directly interacts with FtsZ and promotes bundling of FtsZ protofilaments, with a reduction in FtsZ GTPase activity. In Shigella boydii serotype 18 (strain CDC 3083-94 / BS512), this protein is Cell division protein ZapD.